Here is a 310-residue protein sequence, read N- to C-terminus: Regulator of microtubule dynamics protein 1 (310 aa).

K165 carries the N6-succinyllysine modification. 2 TPR repeats span residues 168–204 (AICI…NPKD) and 222–258 (PWYQ…DPNF).

This sequence belongs to the RMDN family. As to quaternary structure, interacts with microtubules.

The protein resides in the cytoplasm. It is found in the cytoskeleton. The protein localises to the spindle. It localises to the spindle pole. This chain is Regulator of microtubule dynamics protein 1 (Rmdn1), found in Rattus norvegicus (Rat).